Reading from the N-terminus, the 576-residue chain is Putative export ATP-binding/permease protein RT0691 (576 aa).

Positions 20-303 (LIIVMISLLS…IFELLSEIHL (284 aa)) constitute an ABC transmembrane type-1 domain. 6 helical membrane passes run 21–41 (IIVM…GSVF), 61–81 (ILYI…RSYF), 135–155 (FLSF…LMFF), 158–178 (FKLA…LIKF), 242–262 (ALFF…IVWI), and 277–297 (IISF…IFEL). Residues 336 to 572 (IEFKNVDFTY…SEIYRNICRE (237 aa)) enclose the ABC transporter domain. 371 to 378 (GRSGAGKS) contacts ATP.

It belongs to the ABC transporter superfamily. In terms of assembly, homodimer.

It is found in the cell inner membrane. Its function is as follows. Part of an ABC transporter complex. Transmembrane domains (TMD) form a pore in the inner membrane and the ATP-binding domain (NBD) is responsible for energy generation. The sequence is that of Putative export ATP-binding/permease protein RT0691 from Rickettsia typhi (strain ATCC VR-144 / Wilmington).